The primary structure comprises 68 residues: ATP synthase subunit c (68 aa).

2 consecutive transmembrane segments (helical) span residues 4 to 24 (IAAA…NGLI) and 45 to 65 (IMFI…VIAF).

Belongs to the ATPase C chain family. In terms of assembly, F-type ATPases have 2 components, F(1) - the catalytic core - and F(0) - the membrane proton channel. F(1) has five subunits: alpha(3), beta(3), gamma(1), delta(1), epsilon(1). F(0) has three main subunits: a(1), b(2) and c(10-14). The alpha and beta chains form an alternating ring which encloses part of the gamma chain. F(1) is attached to F(0) by a central stalk formed by the gamma and epsilon chains, while a peripheral stalk is formed by the delta and b chains.

Its subcellular location is the cell membrane. Its function is as follows. F(1)F(0) ATP synthase produces ATP from ADP in the presence of a proton or sodium gradient. F-type ATPases consist of two structural domains, F(1) containing the extramembraneous catalytic core and F(0) containing the membrane proton channel, linked together by a central stalk and a peripheral stalk. During catalysis, ATP synthesis in the catalytic domain of F(1) is coupled via a rotary mechanism of the central stalk subunits to proton translocation. In terms of biological role, key component of the F(0) channel; it plays a direct role in translocation across the membrane. A homomeric c-ring of between 10-14 subunits forms the central stalk rotor element with the F(1) delta and epsilon subunits. This chain is ATP synthase subunit c, found in Staphylococcus saprophyticus subsp. saprophyticus (strain ATCC 15305 / DSM 20229 / NCIMB 8711 / NCTC 7292 / S-41).